Reading from the N-terminus, the 103-residue chain is Small ribosomal subunit protein uS10 (103 aa).

Belongs to the universal ribosomal protein uS10 family. As to quaternary structure, part of the 30S ribosomal subunit.

In terms of biological role, involved in the binding of tRNA to the ribosomes. This is Small ribosomal subunit protein uS10 from Pseudomonas aeruginosa (strain LESB58).